We begin with the raw amino-acid sequence, 335 residues long: Glycerol-3-phosphate dehydrogenase [NAD(P)+] (335 aa).

NADPH contacts are provided by S12, W13, H33, R34, and K108. Residues K108, G137, and T139 each coordinate sn-glycerol 3-phosphate. Residue A141 participates in NADPH binding. Sn-glycerol 3-phosphate is bound by residues K192, D245, S255, R256, and N257. K192 acts as the Proton acceptor in catalysis. NADPH is bound at residue R256. E282 provides a ligand contact to NADPH.

Belongs to the NAD-dependent glycerol-3-phosphate dehydrogenase family.

It is found in the cytoplasm. The enzyme catalyses sn-glycerol 3-phosphate + NAD(+) = dihydroxyacetone phosphate + NADH + H(+). It catalyses the reaction sn-glycerol 3-phosphate + NADP(+) = dihydroxyacetone phosphate + NADPH + H(+). It participates in membrane lipid metabolism; glycerophospholipid metabolism. Its function is as follows. Catalyzes the reduction of the glycolytic intermediate dihydroxyacetone phosphate (DHAP) to sn-glycerol 3-phosphate (G3P), the key precursor for phospholipid synthesis. This is Glycerol-3-phosphate dehydrogenase [NAD(P)+] from Methylococcus capsulatus (strain ATCC 33009 / NCIMB 11132 / Bath).